The sequence spans 368 residues: UDP-N-acetylglucosamine--N-acetylmuramyl-(pentapeptide) pyrophosphoryl-undecaprenol N-acetylglucosamine transferase (368 aa).

Residues 10–12, Asn-126, Ser-200, Ile-255, and Gln-300 each bind UDP-N-acetyl-alpha-D-glucosamine; that span reads TGG.

Belongs to the glycosyltransferase 28 family. MurG subfamily.

The protein resides in the cell membrane. It carries out the reaction Mur2Ac(oyl-L-Ala-gamma-D-Glu-L-Lys-D-Ala-D-Ala)-di-trans,octa-cis-undecaprenyl diphosphate + UDP-N-acetyl-alpha-D-glucosamine = beta-D-GlcNAc-(1-&gt;4)-Mur2Ac(oyl-L-Ala-gamma-D-Glu-L-Lys-D-Ala-D-Ala)-di-trans,octa-cis-undecaprenyl diphosphate + UDP + H(+). It participates in cell wall biogenesis; peptidoglycan biosynthesis. Functionally, cell wall formation. Catalyzes the transfer of a GlcNAc subunit on undecaprenyl-pyrophosphoryl-MurNAc-pentapeptide (lipid intermediate I) to form undecaprenyl-pyrophosphoryl-MurNAc-(pentapeptide)GlcNAc (lipid intermediate II). This chain is UDP-N-acetylglucosamine--N-acetylmuramyl-(pentapeptide) pyrophosphoryl-undecaprenol N-acetylglucosamine transferase, found in Lactobacillus helveticus (strain DPC 4571).